The sequence spans 432 residues: Monooxygenase penA (432 aa).

A helical membrane pass occupies residues Phe7–Pro29. Asn33 is a glycosylation site (N-linked (GlcNAc...) asparagine).

It belongs to the aromatic-ring hydroxylase family. It depends on FAD as a cofactor.

It is found in the membrane. The protein operates within secondary metabolite biosynthesis. It participates in alkaloid biosynthesis. Its pathway is mycotoxin biosynthesis. Functionally, monooxygenase; part of the gene cluster that mediates the biosynthesis of penigequinolones, potent insecticidal alkaloids that contain a highly modified 10-carbon prenyl group. The first stage is catalyzed by the nonribosomal peptide synthetase penN that condenses anthranilic acid and O-methyl-L-tyrosine to produce 4'-methoxycyclopeptin. 4'-methoxycyclopeptin is then converted to 4'-methoxydehydrocyclopeptin by the ketoglutarate-dependent dioxygenase penM through dehydrogenation to form a double bond between C-alpha and C-beta of the O-methyltyrosine side chain. PenM also converts its first product methoxydehydrocyclopeptin to 4'-methoxycyclopenin. The following conversion of 4'methoxycyclopenin into 4'-methoxyviridicatin is catalyzed by the cyclopenase penL. 4'-methoxyviridicatin is the precursor of quinolone natural products, and is further converted to quinolinone B. The prenyltransferase penI then catalyzes the canonical Friedel-Crafts alkylation of quinolinone B with dimethylallyl cation to yield dimethylallyl quinolone, which is subjected to FAD-dependent dehydrogenation by the FAD-linked oxidoreductase penH to yield conjugated aryl diene. The delta(3') double bond then serves as the site of the second alkylation with DMAPP catalyzed by the prenyltransferase penG to yield a carbenium ion intermediate, which can be attacked by H(2)O to yield a styrenyl quinolone containing a C3'-hydroxyprenyl chain, or undergo cyclization to yield yaequinolones J1 and J2. The conversion of the styrenyl quinolone into the tetrahydrofuran-containing yaequinolone C is performed by the FAD-dependent monooxygenase penE and involves epoxidation of the terminal C7'-C8' olefin, followed by epoxide ring opening initiated by the C3' hydroxyl group. The predicted cysteine hydrolase penJ acts as an epoxide hydrolase that enhances the rate of the 5-exo-tet cyclization step, increasing the yield of yaequinolone C. PenF catalyzes the cationic rearrangement of the epoxide formed by penE (before ring opening to produce yaequinolone C) into yaequinolone D. Finally, the short-chain dehydrogenase/reductase (SDR)-like reductase penD, catalyzes both the dehydration of yaequinolone D and the reduction of the resulting oxonium to yield penigequinolone. This Penicillium thymicola protein is Monooxygenase penA.